We begin with the raw amino-acid sequence, 484 residues long: Cobyric acid synthase (484 aa).

The region spanning 253-430 is the GATase cobBQ-type domain; the sequence is SLRVAVVRFP…WHGAFEHDEF (178 aa). Cysteine 334 serves as the catalytic Nucleophile. Residue histidine 422 is part of the active site.

It belongs to the CobB/CobQ family. CobQ subfamily.

It functions in the pathway cofactor biosynthesis; adenosylcobalamin biosynthesis. Catalyzes amidations at positions B, D, E, and G on adenosylcobyrinic A,C-diamide. NH(2) groups are provided by glutamine, and one molecule of ATP is hydrogenolyzed for each amidation. This Cutibacterium acnes (strain DSM 16379 / KPA171202) (Propionibacterium acnes) protein is Cobyric acid synthase.